Consider the following 405-residue polypeptide: Glucose-1-phosphate adenylyltransferase 1 (405 aa).

Alpha-D-glucose 1-phosphate contacts are provided by residues Y96, G161, 176-177 (EK), and S194.

It belongs to the bacterial/plant glucose-1-phosphate adenylyltransferase family. As to quaternary structure, homotetramer.

The enzyme catalyses alpha-D-glucose 1-phosphate + ATP + H(+) = ADP-alpha-D-glucose + diphosphate. It functions in the pathway glycan biosynthesis; glycogen biosynthesis. Involved in the biosynthesis of ADP-glucose, a building block required for the elongation reactions to produce glycogen. Catalyzes the reaction between ATP and alpha-D-glucose 1-phosphate (G1P) to produce pyrophosphate and ADP-Glc. This Vibrio parahaemolyticus serotype O3:K6 (strain RIMD 2210633) protein is Glucose-1-phosphate adenylyltransferase 1.